We begin with the raw amino-acid sequence, 777 residues long: Proton-coupled zinc antiporter SLC30A5 (777 aa).

Residues Met-1–Tyr-28 lie on the Cytoplasmic side of the membrane. A helical transmembrane segment spans residues Ile-29 to Leu-49. The Lumenal portion of the chain corresponds to Leu-50–Val-52. A helical transmembrane segment spans residues Val-53–Phe-73. At Gln-74–His-94 the chain is on the cytoplasmic side. A helical transmembrane segment spans residues Ala-95–Leu-115. The Lumenal segment spans residues Arg-116–Thr-117. The chain crosses the membrane as a helical span at residues Leu-118–Gly-138. Topologically, residues Ser-139–Gly-148 are cytoplasmic. The chain crosses the membrane as a helical span at residues Ala-149–Ala-169. Residues Lys-170 to Arg-189 are Lumenal-facing. A helical membrane pass occupies residues Ala-190–Leu-210. At Cys-211 to Gln-234 the chain is on the cytoplasmic side. A helical membrane pass occupies residues Ala-235–Thr-255. At Thr-256–Trp-263 the chain is on the lumenal side. The chain crosses the membrane as a helical span at residues Ser-264–Val-284. The Cytoplasmic portion of the chain corresponds to Glu-285–Arg-299. A helical membrane pass occupies residues Tyr-300–Ile-320. Topologically, residues Thr-321–His-338 are lumenal. The helical transmembrane segment at Val-339 to Ala-359 threads the bilayer. Topologically, residues Ser-360 to Gln-414 are cytoplasmic. The chain crosses the membrane as a helical span at residues Ile-415–Trp-435. At Thr-436 to Asp-444 the chain is on the lumenal side. The helical transmembrane segment at Gly-445–Thr-465 threads the bilayer. Residues His-447 and Asp-451 each contribute to the Zn(2+) site. The Cytoplasmic segment spans residues Arg-466–Ser-484. The chain crosses the membrane as a helical span at residues Gly-485–Ala-505. Topologically, residues Arg-506–Asp-516 are lumenal. Residues Met-517–Ser-537 form a helical membrane-spanning segment. The interval His-538 to His-586 is his-rich loop; required for zinc transport. Topologically, residues His-538–Val-604 are cytoplasmic. The interval Gly-547–Ala-593 is disordered. 2 stretches are compositionally biased toward basic residues: residues Gly-555–His-571 and Asn-579–Ser-589. A helical transmembrane segment spans residues Phe-605–Ile-625. Positions 607 and 611 each coordinate Zn(2+). Topologically, residues Arg-626–Gly-629 are lumenal. Residues Trp-630–Leu-650 traverse the membrane as a helical segment. At Pro-651–Met-777 the chain is on the cytoplasmic side.

It belongs to the cation diffusion facilitator (CDF) transporter (TC 2.A.4) family. SLC30A subfamily. As to quaternary structure, heterodimer with SLC30A6/ZNT6; form a functional zinc ion transmembrane transporter.

The protein resides in the golgi apparatus. The protein localises to the golgi stack membrane. It localises to the cytoplasmic vesicle. Its subcellular location is the COPII-coated vesicle membrane. It is found in the secretory vesicle membrane. The protein resides in the trans-Golgi network membrane. It catalyses the reaction Zn(2+)(in) + 2 H(+)(out) = Zn(2+)(out) + 2 H(+)(in). Its function is as follows. Together with SLC30A6 forms a functional proton-coupled zinc ion antiporter mediating zinc entry into the lumen of organelles along the secretory pathway. By contributing to zinc ion homeostasis within the early secretory pathway, regulates the activation and folding of enzymes like alkaline phosphatases and enzymes involved in phosphatidylinositol glycan anchor biosynthesis. This Xenopus tropicalis (Western clawed frog) protein is Proton-coupled zinc antiporter SLC30A5 (slc30a5).